A 1383-amino-acid polypeptide reads, in one-letter code: DNA-directed RNA polymerase subunit beta (1383 aa).

The protein belongs to the RNA polymerase beta chain family. The RNAP catalytic core consists of 2 alpha, 1 beta, 1 beta' and 1 omega subunit. When a sigma factor is associated with the core the holoenzyme is formed, which can initiate transcription.

It catalyses the reaction RNA(n) + a ribonucleoside 5'-triphosphate = RNA(n+1) + diphosphate. In terms of biological role, DNA-dependent RNA polymerase catalyzes the transcription of DNA into RNA using the four ribonucleoside triphosphates as substrates. The polypeptide is DNA-directed RNA polymerase subunit beta (Bartonella henselae (strain ATCC 49882 / DSM 28221 / CCUG 30454 / Houston 1) (Rochalimaea henselae)).